A 67-amino-acid chain; its full sequence is Bombesin (67 aa).

Residues 1–30 (MSLLPAVKVLPLGYLGIVLVFSLILRSAMV) form the signal peptide. Positions 31 to 49 (DFIQDAGKLERIDTYKREA) are excised as a propeptide. Residue Gln50 is modified to Pyrrolidone carboxylic acid. Met64 is subject to Methionine amide.

This sequence belongs to the bombesin/neuromedin-B/ranatensin family. As to expression, expressed by the skin dorsal glands.

The protein resides in the secreted. Functionally, stimulates smooth muscle contraction in isolated rat stomach strip. This Sanguirana varians (Palawan frog) protein is Bombesin.